An 800-amino-acid chain; its full sequence is MLISYKWLKELVDIDVPSQELAEKMSTTGIEVEGVESPAAGLSKIVVGEVLSCEDVPETHLHVCQVNVGEEERQIVCGAPNVRAGIKVMVALPGARIADNYKIKKGKIRGLESLGMICSLGELGISDSVVPKEFADGIQILPEDAVPGEEVFSYLDLDDEIIELSITPNRADALSMCGVAHEVAAIYDKAVNFKEFTLTETNEAAADALSVSIETDKAPYYAARILDNVTIAPSPQWLQNLLMNEGIRPINNVVDVTNYILLYFGQPMHAFDLDNFEGTDIRVREARAGEKLVTLDGEERDLDVNDLVITVADKPVALAGVMGGQATEISEKSSRVVLEAAVFNGKSIRKTSGRLNLRSESSSRFEKGINVATVNEALDAAASLIAELAGATVRKGIVSAGELDTSDVEVSSTLADVNRVLGTELSYADVEDVFRRLGFGLSGNADSFTVRVPRRRWDITIEADLFEEIARIYGYDRLPTSLPKDDGTAGELTATQKLRRQVRTIAEGAGLTEIITYTLTTPEKAVEFTAQPSNLTELMWPMTVDRSVLRQNMISGILDTVAYNVARKNKNLALYEIGKVFEQTGNPKEELPNEINSFAFALTGLVAEKDFQTAAVPVDFFYAKGILEALFTRLGLQVTYTATSEIASLHPGRTAVISLGDQVLGFLGQVHPVTAKAYDIPETYVAELNLSAIEAALQPATPFVEITKFPAVSRDVALLLKAEVTHQEVVDAIQAAGVKRLTDIKLFDVFSGEKLGLGMKSMAYSLTFQNPEDSLTDEEVARYMEKIQASLEEKVNAEVR.

Residues 39 to 152 enclose the tRNA-binding domain; it reads AAGLSKIVVG…EDAVPGEEVF (114 aa). The B5 domain occupies 405–480; it reads TSDVEVSSTL…RIYGYDRLPT (76 aa). Residues D458, D464, E467, and E468 each coordinate Mg(2+). Positions 707–800 constitute an FDX-ACB domain; that stretch reads TKFPAVSRDV…LEEKVNAEVR (94 aa).

It belongs to the phenylalanyl-tRNA synthetase beta subunit family. Type 1 subfamily. Tetramer of two alpha and two beta subunits. Mg(2+) serves as cofactor.

Its subcellular location is the cytoplasm. It catalyses the reaction tRNA(Phe) + L-phenylalanine + ATP = L-phenylalanyl-tRNA(Phe) + AMP + diphosphate + H(+). The sequence is that of Phenylalanine--tRNA ligase beta subunit from Streptococcus pneumoniae (strain ATCC BAA-255 / R6).